The primary structure comprises 363 residues: Mannose-1-phosphate guanyltransferase (363 aa).

This sequence belongs to the transferase hexapeptide repeat family.

It is found in the cytoplasm. The enzyme catalyses alpha-D-mannose 1-phosphate + GTP + H(+) = GDP-alpha-D-mannose + diphosphate. The protein operates within nucleotide-sugar biosynthesis; GDP-alpha-D-mannose biosynthesis; GDP-alpha-D-mannose from alpha-D-mannose 1-phosphate (GTP route): step 1/1. Functionally, involved in cell wall synthesis where it is required for glycosylation. Involved in cell cycle progression through cell-size checkpoint. This is Mannose-1-phosphate guanyltransferase (MPG1) from Yarrowia lipolytica (strain CLIB 122 / E 150) (Yeast).